The following is a 620-amino-acid chain: Kelch-like protein 32 (620 aa).

One can recognise a BTB domain in the interval Cys42–Pro109. Kelch repeat units lie at residues Thr290–Asp346, Phe347–Glu398, Tyr399–Gly446, Leu447–Arg494, Leu496–Gly547, and Ile549–Ala599.

The polypeptide is Kelch-like protein 32 (KLHL32) (Homo sapiens (Human)).